We begin with the raw amino-acid sequence, 114 residues long: MKKSYRIKKESDFQRVFETHNSVANHKFVIYQMQKPNQPHFRVGISVGKKVGNAVQRGWVKRRIRQTLLEVKPELKQDVDFLVIARKSAADLSMKEIKKNLVHALTLAHLFEEK.

This sequence belongs to the RnpA family. In terms of assembly, consists of a catalytic RNA component (M1 or rnpB) and a protein subunit.

The enzyme catalyses Endonucleolytic cleavage of RNA, removing 5'-extranucleotides from tRNA precursor.. Its function is as follows. RNaseP catalyzes the removal of the 5'-leader sequence from pre-tRNA to produce the mature 5'-terminus. It can also cleave other RNA substrates such as 4.5S RNA. The protein component plays an auxiliary but essential role in vivo by binding to the 5'-leader sequence and broadening the substrate specificity of the ribozyme. In Limosilactobacillus fermentum (strain NBRC 3956 / LMG 18251) (Lactobacillus fermentum), this protein is Ribonuclease P protein component.